The primary structure comprises 388 residues: Protein FAM199X (388 aa).

The span at 288–312 shows a compositional bias: low complexity; the sequence is SMVSSASSSGSSVGNSASNSSANMS. The tract at residues 288–358 is disordered; that stretch reads SMVSSASSSG…QLKEQRQARK (71 aa). 2 positions are modified to phosphoserine: Ser-316 and Ser-321. The span at 330–349 shows a compositional bias: basic residues; sequence DSKKRSKQRKLQQKAFRKRQ.

Belongs to the FAM199 family.

The sequence is that of Protein FAM199X (Fam199x) from Mus musculus (Mouse).